A 245-amino-acid chain; its full sequence is Probable phosphatase YcdX (245 aa).

Residues His-7, His-9, His-15, His-40, Glu-73, His-101, His-131, Asp-192, and His-194 each coordinate Zn(2+).

This sequence belongs to the PHP family. In terms of assembly, homotrimer. Zn(2+) is required as a cofactor.

The protein is Probable phosphatase YcdX of Escherichia coli (strain K12 / MC4100 / BW2952).